We begin with the raw amino-acid sequence, 73 residues long: UPF0435 protein lin1819 (73 aa).

The protein belongs to the UPF0435 family.

The chain is UPF0435 protein lin1819 from Listeria innocua serovar 6a (strain ATCC BAA-680 / CLIP 11262).